A 212-amino-acid polypeptide reads, in one-letter code: Thymidylate kinase (212 aa).

13–20 (GLEGAGKS) contacts ATP.

This sequence belongs to the thymidylate kinase family.

The enzyme catalyses dTMP + ATP = dTDP + ADP. Functionally, phosphorylation of dTMP to form dTDP in both de novo and salvage pathways of dTTP synthesis. The polypeptide is Thymidylate kinase (Legionella pneumophila (strain Paris)).